A 212-amino-acid chain; its full sequence is Thiamine-phosphate synthase (212 aa).

38–42 (QLREK) provides a ligand contact to 4-amino-2-methyl-5-(diphosphooxymethyl)pyrimidine. Mg(2+) is bound by residues Asp-71 and Asp-90. Lys-138 lines the 4-amino-2-methyl-5-(diphosphooxymethyl)pyrimidine pocket. Gly-166 contributes to the 2-[(2R,5Z)-2-carboxy-4-methylthiazol-5(2H)-ylidene]ethyl phosphate binding site.

The protein belongs to the thiamine-phosphate synthase family. Requires Mg(2+) as cofactor.

It carries out the reaction 2-[(2R,5Z)-2-carboxy-4-methylthiazol-5(2H)-ylidene]ethyl phosphate + 4-amino-2-methyl-5-(diphosphooxymethyl)pyrimidine + 2 H(+) = thiamine phosphate + CO2 + diphosphate. It catalyses the reaction 2-(2-carboxy-4-methylthiazol-5-yl)ethyl phosphate + 4-amino-2-methyl-5-(diphosphooxymethyl)pyrimidine + 2 H(+) = thiamine phosphate + CO2 + diphosphate. The enzyme catalyses 4-methyl-5-(2-phosphooxyethyl)-thiazole + 4-amino-2-methyl-5-(diphosphooxymethyl)pyrimidine + H(+) = thiamine phosphate + diphosphate. It participates in cofactor biosynthesis; thiamine diphosphate biosynthesis; thiamine phosphate from 4-amino-2-methyl-5-diphosphomethylpyrimidine and 4-methyl-5-(2-phosphoethyl)-thiazole: step 1/1. Functionally, condenses 4-methyl-5-(beta-hydroxyethyl)thiazole monophosphate (THZ-P) and 2-methyl-4-amino-5-hydroxymethyl pyrimidine pyrophosphate (HMP-PP) to form thiamine monophosphate (TMP). The chain is Thiamine-phosphate synthase from Chlamydia abortus (strain DSM 27085 / S26/3) (Chlamydophila abortus).